The chain runs to 437 residues: MKETPLSNCERRFLLRAIEEKKRLDGRQTYDYRNIRISFGTDYGCCIVELGKTRVLGQVSCELVSPKLNRATEGILFFNLELSQMAAPAFEPGRQSDLLVKLNRLLERCLRNSKCIDTESLCVVAGEKVWQIRVDLHLLNHDGNIIDAASIAAIVALCHFRRPDVSVQGEEVTLYTPEERDPVPLSIHHMPICVSFAFFQQGTYLLVDPNEREERVMDGLLVIAMNKHREICTIQSSGGIMLLKDQVFRCSKIAGVKVAEITELIQKALENDQRVRKEGGKFGFAESIANQRITAFKMEKAPIDTSNIEEKAEEIIAEAEPPPEVVSKPVLWTPGTAQIGEGIENSWGDLEDSEKEEEEEGGIDETVILDDTKMDTGEVSDIGSQGAPIVLSDSEEEEMIILEPEKSPKKIRAQTSANQKAPSKSQGKRRKKKRTAN.

Position 65 is a phosphoserine (S65). Position 297 is an N6-acetyllysine; alternate (K297). K297 participates in a covalent cross-link: Glycyl lysine isopeptide (Lys-Gly) (interchain with G-Cter in SUMO1); alternate. K297 is covalently cross-linked (Glycyl lysine isopeptide (Lys-Gly) (interchain with G-Cter in SUMO2); alternate). 2 positions are modified to phosphoserine: S306 and S346. The tract at residues 339–437 is disordered; the sequence is IGEGIENSWG…KRRKKKRTAN (99 aa). Acidic residues predominate over residues 349-363; sequence DLEDSEKEEEEEGGI. A phosphoserine mark is found at S392, S394, and S407. A compositionally biased stretch (polar residues) spans 413 to 425; it reads AQTSANQKAPSKS. The segment covering 426-437 has biased composition (basic residues); sequence QGKRRKKKRTAN.

The protein belongs to the RNase PH family. In terms of assembly, component of the RNA exosome core complex (Exo-9), composed of EXOSC1, EXOSC2, EXOSC3, EXOSC4, EXOSC5, EXOSC6, EXOSC7, EXOSC8 and EXOSC9; within the complex interacts with EXOSC3, EXOSC4, EXOSC5 and DIS3. The catalytically inactive RNA exosome core complex (Exo-9) associates with the catalytic subunit EXOSC10/RRP6. Exo-9 may associate with DIS3 to form the nucleolar exosome complex, or DIS3L to form the cytoplasmic exosome complex. Exo-9 is formed by a hexameric base ring consisting of the heterodimers EXOSC4-EXOSC9, EXOSC5-EXOSC8 and EXOSC6-EXOSC7, and a cap ring consisting of EXOSC1, EXOSC2 and EXOSC3. The RNA exosome complex associates with cofactors C1D/RRP47, MPHOSPH6/MPP6 and MTREX/MTR4. Interacts (via C-terminus region) with SETX (via N-terminus domain); the interaction enhances SETX sumoylation. Interacts with DIS3; the interaction is direct.

The protein resides in the cytoplasm. Its subcellular location is the nucleus. The protein localises to the nucleolus. It localises to the nucleoplasm. Functionally, non-catalytic component of the RNA exosome complex which has 3'-&gt;5' exoribonuclease activity and participates in a multitude of cellular RNA processing and degradation events. In the nucleus, the RNA exosome complex is involved in proper maturation of stable RNA species such as rRNA, snRNA and snoRNA, in the elimination of RNA processing by-products and non-coding 'pervasive' transcripts, such as antisense RNA species and promoter-upstream transcripts (PROMPTs), and of mRNAs with processing defects, thereby limiting or excluding their export to the cytoplasm. The RNA exosome may be involved in Ig class switch recombination (CSR) and/or Ig variable region somatic hypermutation (SHM) by targeting AICDA deamination activity to transcribed dsDNA substrates. In the cytoplasm, the RNA exosome complex is involved in general mRNA turnover and specifically degrades inherently unstable mRNAs containing AU-rich elements (AREs) within their 3' untranslated regions, and in RNA surveillance pathways, preventing translation of aberrant mRNAs. It seems to be involved in degradation of histone mRNA. The catalytic inactive RNA exosome core complex of 9 subunits (Exo-9) is proposed to play a pivotal role in the binding and presentation of RNA for ribonucleolysis, and to serve as a scaffold for the association with catalytic subunits and accessory proteins or complexes. EXOSC9 binds to ARE-containing RNAs. The chain is Exosome complex component RRP45 (Exosc9) from Rattus norvegicus (Rat).